We begin with the raw amino-acid sequence, 157 residues long: Protein Smg (157 aa).

The protein belongs to the Smg family.

This Escherichia coli O8 (strain IAI1) protein is Protein Smg.